Reading from the N-terminus, the 116-residue chain is Guanylin (116 aa).

Residues M1 to T23 form the signal peptide. Residues V24–D101 constitute a propeptide that is removed on maturation. 3 disulfides stabilise this stretch: C69–C83, C105–C113, and C108–C116.

This sequence belongs to the guanylin family. Localized in both crypts and villi in the small intestine and to superficial epithelial cells in the colon.

The protein localises to the secreted. Its function is as follows. Endogenous activator of intestinal guanylate cyclase. It stimulates this enzyme through the same receptor binding region as the heat-stable enterotoxins. This is Guanylin (Guca2a) from Mus musculus (Mouse).